We begin with the raw amino-acid sequence, 234 residues long: Large ribosomal subunit protein uL1 (234 aa).

It belongs to the universal ribosomal protein uL1 family. Part of the 50S ribosomal subunit.

Its function is as follows. Binds directly to 23S rRNA. The L1 stalk is quite mobile in the ribosome, and is involved in E site tRNA release. Functionally, protein L1 is also a translational repressor protein, it controls the translation of the L11 operon by binding to its mRNA. This is Large ribosomal subunit protein uL1 from Prochlorococcus marinus (strain SARG / CCMP1375 / SS120).